Consider the following 372-residue polypeptide: Chaperone protein DnaJ (372 aa).

A J domain is found at 5–70 (DYYELLEISR…EKKSIYDRYG (66 aa)). A CR-type zinc finger spans residues 134–211 (GCNKEINYKY…CKGTGYEEVK (78 aa)). Zn(2+)-binding residues include C147, C150, C163, C166, C185, C188, C199, and C202. CXXCXGXG motif repeat units lie at residues 147–154 (CKPCEGTG), 163–170 (CPTCKGQG), 185–192 (CPRCGGTG), and 199–206 (CKSCKGTG).

This sequence belongs to the DnaJ family. In terms of assembly, homodimer. Requires Zn(2+) as cofactor.

The protein resides in the cytoplasm. Its function is as follows. Participates actively in the response to hyperosmotic and heat shock by preventing the aggregation of stress-denatured proteins and by disaggregating proteins, also in an autonomous, DnaK-independent fashion. Unfolded proteins bind initially to DnaJ; upon interaction with the DnaJ-bound protein, DnaK hydrolyzes its bound ATP, resulting in the formation of a stable complex. GrpE releases ADP from DnaK; ATP binding to DnaK triggers the release of the substrate protein, thus completing the reaction cycle. Several rounds of ATP-dependent interactions between DnaJ, DnaK and GrpE are required for fully efficient folding. Also involved, together with DnaK and GrpE, in the DNA replication of plasmids through activation of initiation proteins. The protein is Chaperone protein DnaJ of Aliarcobacter butzleri (strain RM4018) (Arcobacter butzleri).